Here is a 127-residue protein sequence, read N- to C-terminus: Major sperm protein 78 (127 aa).

Ala-2 bears the N-acetylalanine mark. The region spanning 9-126 is the MSP domain; sequence DIQTQPGTKI…RRKNLPIEYN (118 aa).

Sperm.

The protein resides in the cell projection. The protein localises to the pseudopodium. It localises to the cytoplasm. It is found in the cytoskeleton. In terms of biological role, central component in molecular interactions underlying sperm crawling. Forms an extensive filament system that extends from sperm villipoda, along the leading edge of the pseudopod. This chain is Major sperm protein 78 (msp-78), found in Caenorhabditis elegans.